The following is a 1077-amino-acid chain: Mitogen-activated protein kinase kinase kinase 9 (1077 aa).

Residues Met1–Glu40 form a disordered region. Low complexity predominate over residues Ala14 to Gly27. Residues Ala28–Ala38 show a composition bias toward acidic residues. One can recognise an SH3 domain in the interval Ala45 to Ala109. A Protein kinase domain is found at Leu137 to Phe405. ATP-binding positions include Ile143–Val151 and Lys164. Catalysis depends on Asp261, which acts as the Proton acceptor. Phosphothreonine; by autocatalysis occurs at positions 297 and 298. Ser301 carries the phosphoserine; by autocatalysis modification. Thr305 carries the post-translational modification Phosphothreonine; by autocatalysis. Leucine-zipper stretches follow at residues Ile423–Leu444 and Leu458–Ile479. The span at Val491–Leu503 shows a compositional bias: basic residues. 6 disordered regions span residues Val491–Ile511, Ser526–Asp606, Glu646–Gly713, Leu748–Glu790, Arg860–Ser971, and Ser986–Ser1011. Position 526 is a phosphoserine (Ser526). Composition is skewed to polar residues over residues Pro559–Arg568 and Pro693–Leu709. Positions Pro755–Leu767 are enriched in basic and acidic residues. A compositionally biased stretch (polar residues) spans Asn863–Ser880. Residues Gly901–Gly915 are compositionally biased toward low complexity. Polar residues predominate over residues His987–Ser1011.

This sequence belongs to the protein kinase superfamily. STE Ser/Thr protein kinase family. MAP kinase kinase kinase subfamily. In terms of assembly, homodimer. Mg(2+) serves as cofactor. In terms of processing, autophosphorylation on serine and threonine residues within the activation loop plays a role in enzyme activation. Thr-305 is likely to be the main autophosphorylation site. Autophosphorylation also occurs on Thr-297 and Ser-301. Expressed in cochlea and utricle.

The enzyme catalyses L-seryl-[protein] + ATP = O-phospho-L-seryl-[protein] + ADP + H(+). The catalysed reaction is L-threonyl-[protein] + ATP = O-phospho-L-threonyl-[protein] + ADP + H(+). Its activity is regulated as follows. Homodimerization via the leucine zipper domains is required for autophosphorylation of multiple sites in the activation loop and subsequent activation. Autophosphorylation at Thr-305 is the key step in activation of MAP3K9/MLK1 and is required for full phosphorylation. Autophosphorylation at Thr-297 and Ser-301 have been shown to be of secondary importance in the activation of MAP3K9/MLK1. Functionally, serine/threonine kinase which acts as an essential component of the MAP kinase signal transduction pathway. Plays an important role in the cascades of cellular responses evoked by changes in the environment. Once activated, acts as an upstream activator of the MKK/JNK signal transduction cascade through the phosphorylation of MAP2K4/MKK4 and MAP2K7/MKK7 which in turn activate the JNKs. The MKK/JNK signaling pathway regulates stress response via activator protein-1 (JUN) and GATA4 transcription factors. Also plays a role in mitochondrial death signaling pathway, including the release cytochrome c, leading to apoptosis. The chain is Mitogen-activated protein kinase kinase kinase 9 (Map3k9) from Mus musculus (Mouse).